The primary structure comprises 269 residues: Probable 3-deoxy-manno-octulosonic acid transferase (269 aa).

The protein resides in the cytoplasm. It catalyses the reaction an alpha-Kdo-(2-&gt;4)-alpha-Kdo-(2-&gt;6)-lipid IVA + CMP-3-deoxy-beta-D-manno-octulosonate = an alpha-Kdo-(2-&gt;4)-alpha-Kdo-(2-&gt;4)-alpha-Kdo-(2-&gt;6)-lipid IVA + CMP + H(+). It functions in the pathway bacterial outer membrane biogenesis; LPS core biosynthesis. In terms of biological role, involved in the biosynthesis of the core oligosaccharide region of lipopolysaccharide (LPS). Required for the addition of 3-deoxy-D-manno-oct-2-ulosonic acid III (KdoIII) to the KdoII residue of the inner lipopolysaccharide core. The protein is Probable 3-deoxy-manno-octulosonic acid transferase of Salmonella typhimurium (strain LT2 / SGSC1412 / ATCC 700720).